Here is a 552-residue protein sequence, read N- to C-terminus: Chaperonin GroEL (552 aa).

ATP is bound by residues 30 to 33, K51, 87 to 91, G415, 480 to 482, and D496; these read TLGP, DGTTT, and NAA.

The protein belongs to the chaperonin (HSP60) family. Forms a cylinder of 14 subunits composed of two heptameric rings stacked back-to-back. Interacts with the co-chaperonin GroES.

The protein localises to the cytoplasm. The enzyme catalyses ATP + H2O + a folded polypeptide = ADP + phosphate + an unfolded polypeptide.. In terms of biological role, together with its co-chaperonin GroES, plays an essential role in assisting protein folding. The GroEL-GroES system forms a nano-cage that allows encapsulation of the non-native substrate proteins and provides a physical environment optimized to promote and accelerate protein folding. This chain is Chaperonin GroEL, found in Coxiella burnetii (strain RSA 331 / Henzerling II).